A 335-amino-acid polypeptide reads, in one-letter code: Beta-ketoacyl-[acyl-carrier-protein] synthase III (335 aa).

Active-site residues include cysteine 119 and histidine 261. The segment at 262–266 is ACP-binding; that stretch reads QANQR. The active site involves asparagine 291.

It belongs to the thiolase-like superfamily. FabH family. In terms of assembly, homodimer.

Its subcellular location is the cytoplasm. It catalyses the reaction malonyl-[ACP] + acetyl-CoA + H(+) = 3-oxobutanoyl-[ACP] + CO2 + CoA. It participates in lipid metabolism; fatty acid biosynthesis. Its function is as follows. Catalyzes the condensation reaction of fatty acid synthesis by the addition to an acyl acceptor of two carbons from malonyl-ACP. Catalyzes the first condensation reaction which initiates fatty acid synthesis and may therefore play a role in governing the total rate of fatty acid production. Possesses both acetoacetyl-ACP synthase and acetyl transacylase activities. Its substrate specificity determines the biosynthesis of branched-chain and/or straight-chain of fatty acids. The polypeptide is Beta-ketoacyl-[acyl-carrier-protein] synthase III (Prochlorococcus marinus (strain MIT 9301)).